Reading from the N-terminus, the 38-residue chain is Photosystem II reaction center protein L (38 aa).

Residues 17–37 form a helical membrane-spanning segment; that stretch reads SLFWGLLLIFVLAVLFSSYFF.

It belongs to the PsbL family. As to quaternary structure, PSII is composed of 1 copy each of membrane proteins PsbA, PsbB, PsbC, PsbD, PsbE, PsbF, PsbH, PsbI, PsbJ, PsbK, PsbL, PsbM, PsbT, PsbX, PsbY, PsbZ, Psb30/Ycf12, at least 3 peripheral proteins of the oxygen-evolving complex and a large number of cofactors. It forms dimeric complexes.

Its subcellular location is the plastid. The protein localises to the chloroplast thylakoid membrane. One of the components of the core complex of photosystem II (PSII). PSII is a light-driven water:plastoquinone oxidoreductase that uses light energy to abstract electrons from H(2)O, generating O(2) and a proton gradient subsequently used for ATP formation. It consists of a core antenna complex that captures photons, and an electron transfer chain that converts photonic excitation into a charge separation. This subunit is found at the monomer-monomer interface and is required for correct PSII assembly and/or dimerization. The polypeptide is Photosystem II reaction center protein L (Porphyra purpurea (Red seaweed)).